The primary structure comprises 436 residues: Proteasome-activating nucleotidase (436 aa).

The stretch at 15–97 forms a coiled coil; that stretch reads EELCRLYRSL…LKSESEQLRS (83 aa). ATP contacts are provided by residues 222–227 and histidine 361; that span reads GTGKTL. The tract at residues 434-436 is docks into pockets in the proteasome alpha-ring to cause gate opening; that stretch reads MFA.

It belongs to the AAA ATPase family. In terms of assembly, homohexamer. The hexameric complex has a two-ring architecture resembling a top hat that caps the 20S proteasome core at one or both ends. Upon ATP-binding, the C-terminus of PAN interacts with the alpha-rings of the proteasome core by binding to the intersubunit pockets.

The protein resides in the cytoplasm. ATPase which is responsible for recognizing, binding, unfolding and translocation of substrate proteins into the archaeal 20S proteasome core particle. Is essential for opening the gate of the 20S proteasome via an interaction with its C-terminus, thereby allowing substrate entry and access to the site of proteolysis. Thus, the C-termini of the proteasomal ATPase function like a 'key in a lock' to induce gate opening and therefore regulate proteolysis. Unfolding activity requires energy from ATP hydrolysis, whereas ATP binding alone promotes ATPase-20S proteasome association which triggers gate opening, and supports translocation of unfolded substrates. This Methanoregula boonei (strain DSM 21154 / JCM 14090 / 6A8) protein is Proteasome-activating nucleotidase.